The chain runs to 261 residues: tRNA pseudouridine synthase A (261 aa).

The active-site Nucleophile is the Asp51. Tyr109 is a substrate binding site.

It belongs to the tRNA pseudouridine synthase TruA family. As to quaternary structure, homodimer.

The catalysed reaction is uridine(38/39/40) in tRNA = pseudouridine(38/39/40) in tRNA. In terms of biological role, formation of pseudouridine at positions 38, 39 and 40 in the anticodon stem and loop of transfer RNAs. The polypeptide is tRNA pseudouridine synthase A (Shewanella baltica (strain OS185)).